Consider the following 428-residue polypeptide: MKTLIKNGSIVTKEGTVKTQDVLLHDGVISAIGLNLEETDAHVIEANGKLVTPGLVDLHVHLREPGGEAKETIETGTKAAAKGGFTTVAAMPNTRPVPDSAEQMSWLTGRIDETGVVRVLPYAAITTRQLGRELTDFAKLKEAGAFAFTDDGVGVQSAAMMLEAMKEAAKLEMAIVAHCEENTLIQNGSVHEGVFSKKHGIAGIPSVCESVHIARDVLLAEAAGVHYHVCHISTKESVRVVRDAKRAGIRVTAEVTPHHLLLCDEDIPGLDAHYKMNPPLRGKEDREALIEGLLDGTIDFIATDHAPHTEEEKGQGMERAPFGIVGLETAFPLLYTHFVKKGTFTLKQLVDWLTIDPAETFQLPYGRLEEGAPADVTIIDLEAERAIDPAHFASKGRNTPFAGWTCQGWPVATLVGGKLVWEEKEVAR.

Positions 59 and 61 each coordinate Zn(2+). Substrate is bound by residues 61–63 (HLR) and asparagine 93. Residues aspartate 151, histidine 178, and histidine 231 each coordinate Zn(2+). Asparagine 277 contacts substrate. Aspartate 304 is a binding site for Zn(2+). The active site involves aspartate 304. Substrate-binding positions include histidine 308 and 322 to 323 (FG).

Belongs to the metallo-dependent hydrolases superfamily. DHOase family. Class I DHOase subfamily. It depends on Zn(2+) as a cofactor.

It catalyses the reaction (S)-dihydroorotate + H2O = N-carbamoyl-L-aspartate + H(+). The protein operates within pyrimidine metabolism; UMP biosynthesis via de novo pathway; (S)-dihydroorotate from bicarbonate: step 3/3. Catalyzes the reversible cyclization of carbamoyl aspartate to dihydroorotate. The polypeptide is Dihydroorotase (Halalkalibacterium halodurans (strain ATCC BAA-125 / DSM 18197 / FERM 7344 / JCM 9153 / C-125) (Bacillus halodurans)).